The sequence spans 370 residues: UDP-N-acetylglucosamine--N-acetylmuramyl-(pentapeptide) pyrophosphoryl-undecaprenol N-acetylglucosamine transferase (370 aa).

Residues 10–12 (TGG), Asn-124, Arg-166, Ser-198, Ile-252, and Gln-297 each bind UDP-N-acetyl-alpha-D-glucosamine.

Belongs to the glycosyltransferase 28 family. MurG subfamily.

It is found in the cell membrane. It catalyses the reaction di-trans,octa-cis-undecaprenyl diphospho-N-acetyl-alpha-D-muramoyl-L-alanyl-D-glutamyl-meso-2,6-diaminopimeloyl-D-alanyl-D-alanine + UDP-N-acetyl-alpha-D-glucosamine = di-trans,octa-cis-undecaprenyl diphospho-[N-acetyl-alpha-D-glucosaminyl-(1-&gt;4)]-N-acetyl-alpha-D-muramoyl-L-alanyl-D-glutamyl-meso-2,6-diaminopimeloyl-D-alanyl-D-alanine + UDP + H(+). Its pathway is cell wall biogenesis; peptidoglycan biosynthesis. In terms of biological role, cell wall formation. Catalyzes the transfer of a GlcNAc subunit on undecaprenyl-pyrophosphoryl-MurNAc-pentapeptide (lipid intermediate I) to form undecaprenyl-pyrophosphoryl-MurNAc-(pentapeptide)GlcNAc (lipid intermediate II). The polypeptide is UDP-N-acetylglucosamine--N-acetylmuramyl-(pentapeptide) pyrophosphoryl-undecaprenol N-acetylglucosamine transferase (Finegoldia magna (strain ATCC 29328 / DSM 20472 / WAL 2508) (Peptostreptococcus magnus)).